Reading from the N-terminus, the 234-residue chain is Phosphoribosylaminoimidazole-succinocarboxamide synthase (234 aa).

It belongs to the SAICAR synthetase family.

The enzyme catalyses 5-amino-1-(5-phospho-D-ribosyl)imidazole-4-carboxylate + L-aspartate + ATP = (2S)-2-[5-amino-1-(5-phospho-beta-D-ribosyl)imidazole-4-carboxamido]succinate + ADP + phosphate + 2 H(+). Its pathway is purine metabolism; IMP biosynthesis via de novo pathway; 5-amino-1-(5-phospho-D-ribosyl)imidazole-4-carboxamide from 5-amino-1-(5-phospho-D-ribosyl)imidazole-4-carboxylate: step 1/2. The polypeptide is Phosphoribosylaminoimidazole-succinocarboxamide synthase (Clostridium botulinum (strain Langeland / NCTC 10281 / Type F)).